Reading from the N-terminus, the 149-residue chain is MATRFRQTRRRRGHVSMGYGRIGKHRKQRGGRGNAGGQHHRKTWFTTFHPDYFGKHGMRVFHLKANKYYCPSINVDSLWSLVGKDVQEQYKNAKTGEEVPVIDCVKHGYFKVLGKGFLPKQPVIVRARYFSEKAQQKIKAVGGACELTA.

The disordered stretch occupies residues 21-40; that stretch reads RIGKHRKQRGGRGNAGGQHH.

This sequence belongs to the universal ribosomal protein uL15 family. In terms of assembly, component of the large ribosomal subunit.

The protein resides in the cytoplasm. It localises to the cytosol. Its subcellular location is the endoplasmic reticulum. Its function is as follows. Component of the large ribosomal subunit. The ribosome is a large ribonucleoprotein complex responsible for the synthesis of proteins in the cell. This Entamoeba histolytica (strain ATCC 30459 / HM-1:IMSS / ABRM) protein is Large ribosomal subunit protein uL15C (rpl27a-3).